The sequence spans 273 residues: Formamidopyrimidine-DNA glycosylase (273 aa).

Residue proline 2 is the Schiff-base intermediate with DNA of the active site. Glutamate 3 functions as the Proton donor in the catalytic mechanism. Catalysis depends on lysine 57, which acts as the Proton donor; for beta-elimination activity. DNA contacts are provided by histidine 90, arginine 109, and lysine 150. An FPG-type zinc finger spans residues 235-269; the sequence is KVYGRAGKECPVCSSKIEEEKIGQRNSFWCGKCQF. Arginine 259 functions as the Proton donor; for delta-elimination activity in the catalytic mechanism.

The protein belongs to the FPG family. Monomer. Zn(2+) serves as cofactor.

The catalysed reaction is Hydrolysis of DNA containing ring-opened 7-methylguanine residues, releasing 2,6-diamino-4-hydroxy-5-(N-methyl)formamidopyrimidine.. It carries out the reaction 2'-deoxyribonucleotide-(2'-deoxyribose 5'-phosphate)-2'-deoxyribonucleotide-DNA = a 3'-end 2'-deoxyribonucleotide-(2,3-dehydro-2,3-deoxyribose 5'-phosphate)-DNA + a 5'-end 5'-phospho-2'-deoxyribonucleoside-DNA + H(+). In terms of biological role, involved in base excision repair of DNA damaged by oxidation or by mutagenic agents. Acts as a DNA glycosylase that recognizes and removes damaged bases. Has a preference for oxidized purines, such as 7,8-dihydro-8-oxoguanine (8-oxoG). Has AP (apurinic/apyrimidinic) lyase activity and introduces nicks in the DNA strand. Cleaves the DNA backbone by beta-delta elimination to generate a single-strand break at the site of the removed base with both 3'- and 5'-phosphates. The sequence is that of Formamidopyrimidine-DNA glycosylase from Aliivibrio fischeri (strain MJ11) (Vibrio fischeri).